Reading from the N-terminus, the 90-residue chain is Small ribosomal subunit protein bS16 (90 aa).

It belongs to the bacterial ribosomal protein bS16 family.

This chain is Small ribosomal subunit protein bS16, found in Bacillus licheniformis (strain ATCC 14580 / DSM 13 / JCM 2505 / CCUG 7422 / NBRC 12200 / NCIMB 9375 / NCTC 10341 / NRRL NRS-1264 / Gibson 46).